The sequence spans 94 residues: Protein FAM24B (94 aa).

The first 21 residues, 1-21 (MPVIAGGILAALLLLIVVVLC), serve as a signal peptide directing secretion.

It belongs to the FAM24 family.

It is found in the secreted. This chain is Protein FAM24B (FAM24B), found in Homo sapiens (Human).